A 189-amino-acid chain; its full sequence is Transcription factor FapR (189 aa).

The protein belongs to the FapR family.

Transcriptional factor involved in regulation of membrane lipid biosynthesis by repressing genes involved in fatty acid and phospholipid metabolism. The protein is Transcription factor FapR of Listeria innocua serovar 6a (strain ATCC BAA-680 / CLIP 11262).